Reading from the N-terminus, the 341-residue chain is Short chain dehydrogenase FGM9 (341 aa).

Residues Leu-38, Lys-63, Asp-88, and Asn-114 each contribute to the NADP(+) site. Active-site proton donor residues include Ser-167 and Tyr-200. NADP(+)-binding residues include Tyr-200 and Lys-204. Lys-204 (lowers pKa of active site Tyr) is an active-site residue.

It belongs to the short-chain dehydrogenases/reductases (SDR) family.

It functions in the pathway secondary metabolite biosynthesis. Short chain dehydrogenase; part of the Fg3_54/C64 gene cluster that mediates the biosynthesis of the octapeptide fusaoctaxin A, a virulence factor that is required for cell-to-cell invasiveness of plant host. The 2 nonribosomal peptide synthetases NRPS9 and NRPS5 form an assembly line which likely utilizes GABA as a starter unit (loaded on the unique module M1 of NRPS9) and sequentially incorporates seven extender units composed of the residues L-Ala, L-allo-Ile, L-Ser, L-Val, L-Ser, L-Leu and L-Leu, respectively. During the process, each of the residues that are tethered on modules M3-M7 of NRPS5 containing an E domain can undergo an epimerization reaction to produce a D-configuration before the transpeptidation reaction occurs. The elongation of the peptidyl chain might be terminated by module M8-mediated L-Leu incorporation, followed by R domain-catalyzed 4 electron reduction to release the resulting octapeptide from the assembly line as an alcohol. Fusaoctaxin A is cleaved by the cluster specific ABC transporter FGM5 to the pentapeptide fusapentaxin A and the tripeptide fusatrixin A. The other enzymes from the cluster, FGM1, FGM2, FGM3 and FGM9 seem not to be involved in the biosynthesis of fusaoctaxin A and their functions have still to be determined. The protein is Short chain dehydrogenase FGM9 of Gibberella zeae (strain ATCC MYA-4620 / CBS 123657 / FGSC 9075 / NRRL 31084 / PH-1) (Wheat head blight fungus).